Consider the following 289-residue polypeptide: MWFQLKIEHCPNDKIEEITEELEEYGALSITLTDKNDNPVLEPEPGTTPLWPEVIIHALFAQAEEAQYVREQLVAKTPSLHCSLEPLADKNWERAWMDDFRPQRFGNRLWVCPTWLPPPEPDAVNLMLDPGLAFGTGTHATTSLCLTWLEQADLKNKSVIDYGCGSGILSLAAIKLGAKHVYAVDIDNQALQATQNNAHANHITESQLSISSPEALQNPVHLIIANILLAPLISLKERFHQLLPSGAHLVTSGILEEQAPLLIDAYDSAFTHIATEYCEGWSLLVFTSK.

S-adenosyl-L-methionine contacts are provided by threonine 142, glycine 163, aspartate 185, and asparagine 226.

This sequence belongs to the methyltransferase superfamily. PrmA family.

The protein resides in the cytoplasm. The catalysed reaction is L-lysyl-[protein] + 3 S-adenosyl-L-methionine = N(6),N(6),N(6)-trimethyl-L-lysyl-[protein] + 3 S-adenosyl-L-homocysteine + 3 H(+). In terms of biological role, methylates ribosomal protein L11. The protein is Ribosomal protein L11 methyltransferase of Legionella pneumophila (strain Corby).